Here is a 214-residue protein sequence, read N- to C-terminus: Single-pass membrane and coiled-coil domain-containing protein 1 (214 aa).

Residues 6 to 42 (TTLISLKEAMKRVDHKLQALETQFKELDFTKDNLMQK) are a coiled coil. A helical transmembrane segment spans residues 65-81 (ALQLTSMELNILYSYVI).

It is found in the membrane. This is Single-pass membrane and coiled-coil domain-containing protein 1 (SMCO1) from Homo sapiens (Human).